Consider the following 235-residue polypeptide: Uridylate kinase (235 aa).

Position 9 to 12 (9 to 12) interacts with ATP; that stretch reads KLSG. Residue G51 coordinates UMP. ATP is bound by residues G52 and R56. UMP-binding positions include D71 and 132–139; that span reads TGNPYFTT. Positions 159, 165, and 168 each coordinate ATP.

The protein belongs to the UMP kinase family. Homohexamer.

Its subcellular location is the cytoplasm. It catalyses the reaction UMP + ATP = UDP + ADP. Its pathway is pyrimidine metabolism; CTP biosynthesis via de novo pathway; UDP from UMP (UMPK route): step 1/1. With respect to regulation, inhibited by UTP. Functionally, catalyzes the reversible phosphorylation of UMP to UDP. The protein is Uridylate kinase of Christiangramia forsetii (strain DSM 17595 / CGMCC 1.15422 / KT0803) (Gramella forsetii).